The chain runs to 74 residues: Molt-inhibiting hormone (74 aa).

Residue Q1 is modified to Pyrrolidone carboxylic acid. Disulfide bonds link C7-C43, C23-C39, and C26-C52. Position 72 is a valine amide (V72).

Its subcellular location is the secreted. In terms of biological role, inhibits Y-organs where molting hormone (ecdysteroid) is secreted. A molting cycle is initiated when MIH secretion diminishes or stops. The polypeptide is Molt-inhibiting hormone (Procambarus bouvieri (Mexican crayfish)).